Consider the following 97-residue polypeptide: YcgL domain-containing protein PA1295 (97 aa).

The YcgL domain maps to 3 to 87 (RICSVYKSPR…GEEEYIEHLP (85 aa)).

The sequence is that of YcgL domain-containing protein PA1295 from Pseudomonas aeruginosa (strain ATCC 15692 / DSM 22644 / CIP 104116 / JCM 14847 / LMG 12228 / 1C / PRS 101 / PAO1).